A 284-amino-acid chain; its full sequence is MMADEKKTPENEAETATPAVAVEDALKAEPTETLEAQKAKAEAETPAVAETPSEAAANQSAAQGAEGQPRERGGHDRGGRGGRGGNDRGRGRGGRDNRRGGRREEEDDGIIEKLVHINRVSKTVKGGKRFGFAALVVVGDGQGRVGFGKGKAREVPEAIQKATAAARKKMIRVALKEGRTLHHDGNGRFGAGKVTVRTAPPGTGIIAGGPMRAVFESLGVADVVTKSVGTSNPYNMIRATFDALQDQTSPKSVAQRRGKKVADLLGRGGASEAEAEADAAAIAE.

The segment covering 1-10 has biased composition (basic and acidic residues); that stretch reads MMADEKKTPE. The disordered stretch occupies residues 1–105; it reads MMADEKKTPE…DNRRGGRREE (105 aa). Low complexity predominate over residues 14–23; the sequence is ETATPAVAVE. Residues 24-43 are compositionally biased toward basic and acidic residues; sequence DALKAEPTETLEAQKAKAEA. A compositionally biased stretch (low complexity) spans 44-67; sequence ETPAVAETPSEAAANQSAAQGAEG. Residues 68–105 show a composition bias toward basic and acidic residues; that stretch reads QPRERGGHDRGGRGGRGGNDRGRGRGGRDNRRGGRREE. The S5 DRBM domain occupies 110 to 173; it reads IIEKLVHINR…AAARKKMIRV (64 aa). The interval 246-284 is disordered; sequence DQTSPKSVAQRRGKKVADLLGRGGASEAEAEADAAAIAE.

The protein belongs to the universal ribosomal protein uS5 family. Part of the 30S ribosomal subunit. Contacts proteins S4 and S8.

Functionally, with S4 and S12 plays an important role in translational accuracy. Its function is as follows. Located at the back of the 30S subunit body where it stabilizes the conformation of the head with respect to the body. The polypeptide is Small ribosomal subunit protein uS5 (Erythrobacter litoralis (strain HTCC2594)).